A 734-amino-acid chain; its full sequence is Photosystem I P700 chlorophyll a apoprotein A2 (734 aa).

8 helical membrane-spanning segments follow: residues 46–69 (IFAS…FHVA), 135–158 (LYTG…LHLQ), 175–199 (LNHH…HVAI), 273–291 (MAHH…GHMY), 330–353 (IHFQ…QHMY), 369–395 (AALY…IFFI), 417–439 (AIIS…LYVH), and 517–535 (FLVH…LILV). The [4Fe-4S] cluster site is built by Cys559 and Cys568. The next 2 membrane-spanning stretches (helical) occupy residues 575–596 (AFYL…YWHW) and 643–665 (LSVW…MFLI). Chlorophyll a contacts are provided by His654, Met662, and Tyr670. Trp671 is a binding site for phylloquinone. A helical membrane pass occupies residues 707-727 (LVGLAHFSVGYIFTYAAFLIA).

Belongs to the PsaA/PsaB family. As to quaternary structure, the PsaA/B heterodimer binds the P700 chlorophyll special pair and subsequent electron acceptors. PSI consists of a core antenna complex that captures photons, and an electron transfer chain that converts photonic excitation into a charge separation. The eukaryotic PSI reaction center is composed of at least 11 subunits. P700 is a chlorophyll a/chlorophyll a' dimer, A0 is one or more chlorophyll a, A1 is one or both phylloquinones and FX is a shared 4Fe-4S iron-sulfur center. is required as a cofactor.

The protein localises to the plastid. Its subcellular location is the chloroplast thylakoid membrane. It catalyses the reaction reduced [plastocyanin] + hnu + oxidized [2Fe-2S]-[ferredoxin] = oxidized [plastocyanin] + reduced [2Fe-2S]-[ferredoxin]. Its function is as follows. PsaA and PsaB bind P700, the primary electron donor of photosystem I (PSI), as well as the electron acceptors A0, A1 and FX. PSI is a plastocyanin-ferredoxin oxidoreductase, converting photonic excitation into a charge separation, which transfers an electron from the donor P700 chlorophyll pair to the spectroscopically characterized acceptors A0, A1, FX, FA and FB in turn. Oxidized P700 is reduced on the lumenal side of the thylakoid membrane by plastocyanin. The sequence is that of Photosystem I P700 chlorophyll a apoprotein A2 from Hordeum vulgare (Barley).